The chain runs to 174 residues: Co-chaperone protein HscB homolog (174 aa).

One can recognise a J domain in the interval 2–74; that stretch reads NYFELFKFSP…IRRAEHMLSL (73 aa).

Belongs to the HscB family. In terms of assembly, interacts with HscA and stimulates its ATPase activity.

In terms of biological role, co-chaperone involved in the maturation of iron-sulfur cluster-containing proteins. Seems to help targeting proteins to be folded toward HscA. This chain is Co-chaperone protein HscB homolog, found in Shewanella sp. (strain ANA-3).